The sequence spans 664 residues: Xyloglucan-specific galacturonosyltransferase 1 (664 aa).

Residues 1–21 (MSLSKHLQKLVHKRESKKQPN) are compositionally biased toward basic residues. Residues 1 to 49 (MSLSKHLQKLVHKRESKKQPNKKMPVSVSKLRRPRTSKKTETGNPEKTL) form a disordered region. Topologically, residues 1-71 (MSLSKHLQKL…IFSARSFLYR (71 aa)) are cytoplasmic. A helical; Signal-anchor for type II membrane protein transmembrane segment spans residues 72-92 (VPLTILFLFLIYLWSTSTTVI). The Lumenal segment spans residues 93–664 (SGNVVHICIS…SLFKKIAKTV (572 aa)). N126, N158, N175, N181, N355, N379, and N522 each carry an N-linked (GlcNAc...) asparagine glycan.

This sequence belongs to the glycosyltransferase 47 family. In terms of tissue distribution, root hair specific. Expressed in roots and young leaves.

The protein localises to the golgi apparatus membrane. Functionally, xyloglucan-specific galacturonosyltransferase that forms the beta-D-galactosyluronic acid-(1-&gt;2)-alpha-D-xylosyl linkage. Required for root hair development probably by providing important acidic xyloglucans. The protein is Xyloglucan-specific galacturonosyltransferase 1 of Arabidopsis thaliana (Mouse-ear cress).